Consider the following 118-residue polypeptide: Aspartate 1-decarboxylase (118 aa).

Residue Ser25 is the Schiff-base intermediate with substrate; via pyruvic acid of the active site. Ser25 carries the post-translational modification Pyruvic acid (Ser). Residue Thr57 participates in substrate binding. The active-site Proton donor is the Tyr58. Substrate is bound at residue 73–75 (GAA).

Belongs to the PanD family. Heterooctamer of four alpha and four beta subunits. Pyruvate serves as cofactor. Is synthesized initially as an inactive proenzyme, which is activated by self-cleavage at a specific serine bond to produce a beta-subunit with a hydroxyl group at its C-terminus and an alpha-subunit with a pyruvoyl group at its N-terminus.

Its subcellular location is the cytoplasm. The enzyme catalyses L-aspartate + H(+) = beta-alanine + CO2. The protein operates within cofactor biosynthesis; (R)-pantothenate biosynthesis; beta-alanine from L-aspartate: step 1/1. Catalyzes the pyruvoyl-dependent decarboxylation of aspartate to produce beta-alanine. The protein is Aspartate 1-decarboxylase of Caulobacter vibrioides (strain ATCC 19089 / CIP 103742 / CB 15) (Caulobacter crescentus).